The primary structure comprises 557 residues: CTP synthase (557 aa).

The amidoligase domain stretch occupies residues 1-267; that stretch reads MAKFVFVTGG…CREVLDVLDL (267 aa). S13 contributes to the CTP binding site. S13 contacts UTP. ATP contacts are provided by residues 14–19 and D71; that span reads SIGKGI. D71 and E141 together coordinate Mg(2+). CTP-binding positions include 148-150, 188-193, and K224; these read DIE and KTKPTQ. Residues 188–193 and K224 each bind UTP; that span reads KTKPTQ. Residues 292–534 form the Glutamine amidotransferase type-1 domain; sequence KVALVGKYVQ…IEAAQQRLPC (243 aa). Position 354 (G354) interacts with L-glutamine. The Nucleophile; for glutamine hydrolysis role is filled by C381. Residues 382–385, E405, and R462 contribute to the L-glutamine site; that span reads LGMQ. Catalysis depends on residues H507 and E509. A disordered region spans residues 532–557; sequence LPCSPSEAMRQQNNSAAGSSHPSLQP. Polar residues predominate over residues 540-557; it reads MRQQNNSAAGSSHPSLQP.

It belongs to the CTP synthase family. As to quaternary structure, homotetramer.

It carries out the reaction UTP + L-glutamine + ATP + H2O = CTP + L-glutamate + ADP + phosphate + 2 H(+). The catalysed reaction is L-glutamine + H2O = L-glutamate + NH4(+). It catalyses the reaction UTP + NH4(+) + ATP = CTP + ADP + phosphate + 2 H(+). It functions in the pathway pyrimidine metabolism; CTP biosynthesis via de novo pathway; CTP from UDP: step 2/2. Allosterically activated by GTP, when glutamine is the substrate; GTP has no effect on the reaction when ammonia is the substrate. The allosteric effector GTP functions by stabilizing the protein conformation that binds the tetrahedral intermediate(s) formed during glutamine hydrolysis. Inhibited by the product CTP, via allosteric rather than competitive inhibition. Functionally, catalyzes the ATP-dependent amination of UTP to CTP with either L-glutamine or ammonia as the source of nitrogen. Regulates intracellular CTP levels through interactions with the four ribonucleotide triphosphates. The protein is CTP synthase of Synechococcus sp. (strain CC9311).